A 580-amino-acid chain; its full sequence is FAD-dependent monooxygenase yanF (580 aa).

Residues Met-1–Thr-21 form a disordered region. In terms of domain architecture, FAD-binding PCMH-type spans Cys-150–Gly-322. The residue at position 187 (His-187) is a Pros-8alpha-FAD histidine.

This sequence belongs to the oxygen-dependent FAD-linked oxidoreductase family.

Its pathway is secondary metabolite biosynthesis; terpenoid biosynthesis. Functionally, FAD-dependent monooxygenase; part of the gene cluster that mediates the biosynthesis of yanuthone D, a fungal isoprenoid epoxycyclohexenone that acts as an antibiotic against fungi and bacteria. The first step of the pathway is the synthesis of 6-methylsalicylic acid (6-MSA) by the polyketide synthase yanA. 6-MSA is then converted to m-cresol by the decarboxylase yanB. The cytochrome P450 monooxygenase yanC then catalyzes the oxidation of m-cresol to toluquinol. Epoxidation of toluquinol is then performed by the short chain dehydrogenase yanD, with the help of yanE, and a further prenylated by yanG leads to 7-deacetoxyyanuthone A. The next step is the hydroxylation of C-22 of 7-deacetoxyyanuthone A by the cytochrome P450 monooxygenase yanH to yield 22-deacetylyanuthone A. O-Mevalon transferase yanI then attaches mevalon to the hydroxyl group of 22-deacetylyanuthone A to produce yanuthone E. Finally, the FAD-dependent monooxygenase yanF oxidizes the hydroxyl group at C15 of yanuthone E to form yanuthone D. Furthermore, several branching points in the pathway lead to the production of yanuthones F and G from 7-deacetoxyyanuthone A; yanuthones H and I from 22-deacetylyanuthone A; and yanuthone J from yanuthone E. This chain is FAD-dependent monooxygenase yanF, found in Aspergillus niger (strain ATCC 1015 / CBS 113.46 / FGSC A1144 / LSHB Ac4 / NCTC 3858a / NRRL 328 / USDA 3528.7).